We begin with the raw amino-acid sequence, 468 residues long: MTGKTLYDKIWDAHLAHEAEDGTSLLYIDRHLVHEVTSPQAFEGLRMAGRSVHAPDKTIAVPDHNVPTTEGRDDPKNMTEDSAIQVAALDKNAKDFGIHYYPVSDVRQGIVHIVGPEQGWTLPGMTVVCGDSHTATHGAFGALAHGIGTSEVEHVLATQTLIQKKSKNMKVEITGKLAPGVTAKDITLTVIGRTGTAGGTGYVIEYCGEAIRDLSMEGRMTVCNMAIEGGARAGIIAPDEKTFEYCMGRPHAPKGAQWEAALAWWKTLYSDDDAHWDEVVTIRGEDIAPVVTWGTSPEDVLPITAEVPAADSFEGGKVGAAQRSLDYMGLTAGTPLDQIEIDTVFIGSCTNGRIEDLRAAASILKGKKVKDGLRAMIVPGSGLVRAQAEEEGLADIFKDAGFEWRLAGCSMCLAMNPDQLSPGERCAATSNRNFEGRQGRGGRTHLMSPAMAAAAAITGRLTDVRELM.

Positions 349, 409, and 412 each coordinate [4Fe-4S] cluster.

Belongs to the aconitase/IPM isomerase family. LeuC type 1 subfamily. In terms of assembly, heterodimer of LeuC and LeuD. [4Fe-4S] cluster is required as a cofactor.

It carries out the reaction (2R,3S)-3-isopropylmalate = (2S)-2-isopropylmalate. The protein operates within amino-acid biosynthesis; L-leucine biosynthesis; L-leucine from 3-methyl-2-oxobutanoate: step 2/4. Catalyzes the isomerization between 2-isopropylmalate and 3-isopropylmalate, via the formation of 2-isopropylmaleate. The sequence is that of 3-isopropylmalate dehydratase large subunit from Jannaschia sp. (strain CCS1).